A 100-amino-acid polypeptide reads, in one-letter code: Cytochrome c2 iso-1 (100 aa).

4 residues coordinate heme c: C11, C14, H15, and M76.

Belongs to the cytochrome c family. Binds 1 heme c group covalently per subunit.

Its function is as follows. Cytochrome c2 is found mainly in purple, non-sulfur, photosynthetic bacteria where it functions as the electron donor to the oxidized bacteriochlorophyll in the photophosphorylation pathway. However, it may also have a role in the respiratory chain and is found in some non-photosynthetic bacteria. This chain is Cytochrome c2 iso-1, found in Magnetospirillum molischianum (Rhodospirillum molischianum).